The chain runs to 323 residues: Acetyl-coenzyme A carboxylase carboxyl transferase subunit alpha (323 aa).

Positions 39–293 (RLAGKSQQLT…KRSLAESLRQ (255 aa)) constitute a CoA carboxyltransferase C-terminal domain.

This sequence belongs to the AccA family. As to quaternary structure, acetyl-CoA carboxylase is a heterohexamer composed of biotin carboxyl carrier protein (AccB), biotin carboxylase (AccC) and two subunits each of ACCase subunit alpha (AccA) and ACCase subunit beta (AccD).

It is found in the cytoplasm. The catalysed reaction is N(6)-carboxybiotinyl-L-lysyl-[protein] + acetyl-CoA = N(6)-biotinyl-L-lysyl-[protein] + malonyl-CoA. Its pathway is lipid metabolism; malonyl-CoA biosynthesis; malonyl-CoA from acetyl-CoA: step 1/1. Functionally, component of the acetyl coenzyme A carboxylase (ACC) complex. First, biotin carboxylase catalyzes the carboxylation of biotin on its carrier protein (BCCP) and then the CO(2) group is transferred by the carboxyltransferase to acetyl-CoA to form malonyl-CoA. In Cupriavidus necator (strain ATCC 17699 / DSM 428 / KCTC 22496 / NCIMB 10442 / H16 / Stanier 337) (Ralstonia eutropha), this protein is Acetyl-coenzyme A carboxylase carboxyl transferase subunit alpha.